The chain runs to 101 residues: Small ribosomal subunit protein uS14 (101 aa).

This sequence belongs to the universal ribosomal protein uS14 family. Part of the 30S ribosomal subunit. Contacts proteins S3 and S10.

In terms of biological role, binds 16S rRNA, required for the assembly of 30S particles and may also be responsible for determining the conformation of the 16S rRNA at the A site. This chain is Small ribosomal subunit protein uS14, found in Aliivibrio salmonicida (strain LFI1238) (Vibrio salmonicida (strain LFI1238)).